We begin with the raw amino-acid sequence, 816 residues long: tRNA(Met) cytidine acetyltransferase TmcA (816 aa).

2 residues coordinate ATP: Q265 and R439. The region spanning E469–S664 is the N-acetyltransferase domain. Acetyl-CoA contacts are provided by residues I589–T591, E629, and R636.

Belongs to the TmcA family.

Its subcellular location is the cytoplasm. It catalyses the reaction cytidine(34) in elongator tRNA(Met) + acetyl-CoA + ATP + H2O = N(4)-acetylcytidine(34) in elongator tRNA(Met) + ADP + phosphate + CoA + H(+). The enzyme catalyses a cytidine in RNA + acetyl-CoA + ATP + H2O = an N(4)-acetylcytidine in RNA + ADP + phosphate + CoA + H(+). It carries out the reaction a cytidine in tRNA + acetyl-CoA + ATP + H2O = an N(4)-acetylcytidine in tRNA + ADP + phosphate + CoA + H(+). The catalysed reaction is a cytidine in mRNA + acetyl-CoA + ATP + H2O = an N(4)-acetylcytidine in mRNA + ADP + phosphate + CoA + H(+). In terms of biological role, catalyzes the formation of N(4)-acetylcytidine (ac(4)C) at the wobble position of tRNA(Met), by using acetyl-CoA as an acetyl donor and ATP (or GTP). Catalyzes the formation of 233 N(4)-acetylcytidine (ac(4)C) sites in RNA, on the middle C of a CCG motif. Modifications are found in rRNA, ncRNA, mRNA and tRNA. More acetylation is observed at 85 than at 65 or 75 degrees Celsius. In Pyrococcus furiosus (strain ATCC 43587 / DSM 3638 / JCM 8422 / Vc1), this protein is tRNA(Met) cytidine acetyltransferase TmcA.